Reading from the N-terminus, the 394-residue chain is Chorismate synthase (394 aa).

Arginine 40 and arginine 46 together coordinate NADP(+). Residues 135–137 (RAS) and 255–256 (QA) each bind FMN. The segment at 270–291 (RRRGSGAHDEIEPAGAGSRRVR) is disordered. FMN is bound by residues glycine 302, 317–321 (KPISS), and arginine 343.

Belongs to the chorismate synthase family. As to quaternary structure, homotetramer. The cofactor is FMNH2.

The enzyme catalyses 5-O-(1-carboxyvinyl)-3-phosphoshikimate = chorismate + phosphate. The protein operates within metabolic intermediate biosynthesis; chorismate biosynthesis; chorismate from D-erythrose 4-phosphate and phosphoenolpyruvate: step 7/7. In terms of biological role, catalyzes the anti-1,4-elimination of the C-3 phosphate and the C-6 proR hydrogen from 5-enolpyruvylshikimate-3-phosphate (EPSP) to yield chorismate, which is the branch point compound that serves as the starting substrate for the three terminal pathways of aromatic amino acid biosynthesis. This reaction introduces a second double bond into the aromatic ring system. In Frankia casuarinae (strain DSM 45818 / CECT 9043 / HFP020203 / CcI3), this protein is Chorismate synthase.